Reading from the N-terminus, the 177-residue chain is Dynein light chain Tctex-type 5-A (177 aa).

This sequence belongs to the dynein light chain Tctex-type family.

The protein is Dynein light chain Tctex-type 5-A (Dynlt5-a) of Xenopus laevis (African clawed frog).